The sequence spans 83 residues: Exodeoxyribonuclease 7 small subunit (83 aa).

Belongs to the XseB family. In terms of assembly, heterooligomer composed of large and small subunits.

The protein resides in the cytoplasm. It carries out the reaction Exonucleolytic cleavage in either 5'- to 3'- or 3'- to 5'-direction to yield nucleoside 5'-phosphates.. Functionally, bidirectionally degrades single-stranded DNA into large acid-insoluble oligonucleotides, which are then degraded further into small acid-soluble oligonucleotides. This is Exodeoxyribonuclease 7 small subunit from Novosphingobium aromaticivorans (strain ATCC 700278 / DSM 12444 / CCUG 56034 / CIP 105152 / NBRC 16084 / F199).